A 147-amino-acid polypeptide reads, in one-letter code: UPF0735 ACT domain-containing protein RBAM_024960 (147 aa).

The region spanning 70–145 (TLFFHLEDRS…FIEKVEILGS (76 aa)) is the ACT domain.

Belongs to the UPF0735 family.

The chain is UPF0735 ACT domain-containing protein RBAM_024960 from Bacillus velezensis (strain DSM 23117 / BGSC 10A6 / LMG 26770 / FZB42) (Bacillus amyloliquefaciens subsp. plantarum).